The primary structure comprises 590 residues: Phosphomethylpyrimidine synthase (590 aa).

Substrate-binding positions include N197, M226, Y255, H291, S311–G313, D352–R355, and E391. H395 is a Zn(2+) binding site. Y418 contributes to the substrate binding site. Zn(2+) is bound at residue H459. [4Fe-4S] cluster is bound by residues C539, C542, and C547.

Belongs to the ThiC family. Requires [4Fe-4S] cluster as cofactor.

The catalysed reaction is 5-amino-1-(5-phospho-beta-D-ribosyl)imidazole + S-adenosyl-L-methionine = 4-amino-2-methyl-5-(phosphooxymethyl)pyrimidine + CO + 5'-deoxyadenosine + formate + L-methionine + 3 H(+). It functions in the pathway cofactor biosynthesis; thiamine diphosphate biosynthesis. Its function is as follows. Catalyzes the synthesis of the hydroxymethylpyrimidine phosphate (HMP-P) moiety of thiamine from aminoimidazole ribotide (AIR) in a radical S-adenosyl-L-methionine (SAM)-dependent reaction. This chain is Phosphomethylpyrimidine synthase, found in Bacillus velezensis (strain DSM 23117 / BGSC 10A6 / LMG 26770 / FZB42) (Bacillus amyloliquefaciens subsp. plantarum).